Reading from the N-terminus, the 87-residue chain is DNA-directed RNA polymerase subunit omega (87 aa).

Belongs to the RNA polymerase subunit omega family. As to quaternary structure, the RNAP catalytic core consists of 2 alpha, 1 beta, 1 beta' and 1 omega subunit. When a sigma factor is associated with the core the holoenzyme is formed, which can initiate transcription.

It catalyses the reaction RNA(n) + a ribonucleoside 5'-triphosphate = RNA(n+1) + diphosphate. Promotes RNA polymerase assembly. Latches the N- and C-terminal regions of the beta' subunit thereby facilitating its interaction with the beta and alpha subunits. This Pseudomonas syringae pv. syringae (strain B728a) protein is DNA-directed RNA polymerase subunit omega.